A 625-amino-acid polypeptide reads, in one-letter code: Isocitrate dehydrogenase kinase/phosphatase (625 aa).

Residues Ala325–Met331 and Lys346 contribute to the ATP site. Residue Asp381 is part of the active site. Residues Arg596–Pro625 form a disordered region.

It belongs to the AceK family.

It is found in the cytoplasm. It carries out the reaction L-seryl-[isocitrate dehydrogenase] + ATP = O-phospho-L-seryl-[isocitrate dehydrogenase] + ADP + H(+). Its function is as follows. Bifunctional enzyme which can phosphorylate or dephosphorylate isocitrate dehydrogenase (IDH) on a specific serine residue. This is a regulatory mechanism which enables bacteria to bypass the Krebs cycle via the glyoxylate shunt in response to the source of carbon. When bacteria are grown on glucose, IDH is fully active and unphosphorylated, but when grown on acetate or ethanol, the activity of IDH declines drastically concomitant with its phosphorylation. The polypeptide is Isocitrate dehydrogenase kinase/phosphatase (Polaromonas sp. (strain JS666 / ATCC BAA-500)).